A 210-amino-acid chain; its full sequence is Endonuclease III (210 aa).

Residues 108–127 (RIELESLPGVGRKTANIILN) form the HhH domain. [4Fe-4S] cluster is bound by residues cysteine 187, cysteine 194, cysteine 197, and cysteine 203.

The protein belongs to the Nth/MutY family. [4Fe-4S] cluster serves as cofactor.

It catalyses the reaction 2'-deoxyribonucleotide-(2'-deoxyribose 5'-phosphate)-2'-deoxyribonucleotide-DNA = a 3'-end 2'-deoxyribonucleotide-(2,3-dehydro-2,3-deoxyribose 5'-phosphate)-DNA + a 5'-end 5'-phospho-2'-deoxyribonucleoside-DNA + H(+). Its function is as follows. DNA repair enzyme that has both DNA N-glycosylase activity and AP-lyase activity. The DNA N-glycosylase activity releases various damaged pyrimidines from DNA by cleaving the N-glycosidic bond, leaving an AP (apurinic/apyrimidinic) site. The AP-lyase activity cleaves the phosphodiester bond 3' to the AP site by a beta-elimination, leaving a 3'-terminal unsaturated sugar and a product with a terminal 5'-phosphate. The protein is Endonuclease III of Buchnera aphidicola subsp. Acyrthosiphon pisum (strain APS) (Acyrthosiphon pisum symbiotic bacterium).